The following is an 81-amino-acid chain: Antimicrobial peptide Con22 (81 aa).

Residues 1–22 (MNAKVMLVCLLVTMLVMEPAEA) form the signal peptide. Residues 66–81 (EAGQIPFDEFMNVLYS) constitute a propeptide that is removed on maturation.

It belongs to the non-disulfide-bridged peptide (NDBP) superfamily. Long chain multifunctional peptide (group 2) family. In terms of tissue distribution, expressed by the venom gland.

The protein localises to the secreted. Its subcellular location is the target cell membrane. Its function is as follows. At high concentrations, acts as a pore former in cellular membranes and causes the leakage of the cells. At submicromolar concentrations, degranulates granulocytes and has a weak hemolytic activity against human erythrocytes. Also strongly inhibits the production of superoxide anions. Has a strong antibacterial activity against Gram-negative bacteria but is less active against Gram-positive bacteria. Also has antifungal activity. The chain is Antimicrobial peptide Con22 from Urodacus yaschenkoi (Inland robust scorpion).